The sequence spans 98 residues: Protein E7 (98 aa).

Positions 1 to 37 (MKGQNVTLQDIAIELEDTISPINLHCEEEIETEEVDT) are E7 terminal domain. Positions 24-28 (LHCEE) match the LXCXE motif; interaction with host RB1 and TMEM173/STING motif. The segment at 47–83 (CYACEQVLRLAVVTSTEGIHQLQQLLFDNLFLLCAAC) is a zinc-finger region. The Nuclear export signal signature appears at 65–73 (IHQLQQLLF).

This sequence belongs to the papillomaviridae E7 protein family. As to quaternary structure, homodimer. Homooligomer. Interacts with host RB1; this interaction induces dissociation of RB1-E2F1 complex thereby disrupting RB1 activity. Interacts with host EP300; this interaction represses EP300 transcriptional activity. Interacts with protein E2; this interaction inhibits E7 oncogenic activity. Interacts with host TMEM173/STING; this interaction impairs the ability of TMEM173/STING to sense cytosolic DNA and promote the production of type I interferon (IFN-alpha and IFN-beta). In terms of processing, highly phosphorylated.

The protein localises to the host cytoplasm. It localises to the host nucleus. Plays a role in viral genome replication by driving entry of quiescent cells into the cell cycle. Stimulation of progression from G1 to S phase allows the virus to efficiently use the cellular DNA replicating machinery to achieve viral genome replication. E7 protein has both transforming and trans-activating activities. Induces the disassembly of the E2F1 transcription factor from RB1, with subsequent transcriptional activation of E2F1-regulated S-phase genes. Interferes with host histone deacetylation mediated by HDAC1 and HDAC2, leading to transcription activation. Also plays a role in the inhibition of both antiviral and antiproliferative functions of host interferon alpha. Interaction with host TMEM173/STING impairs the ability of TMEM173/STING to sense cytosolic DNA and promote the production of type I interferon (IFN-alpha and IFN-beta). The chain is Protein E7 from Bos taurus papillomavirus 4 (Bovine papillomavirus 4).